The sequence spans 66 residues: Large ribosomal subunit protein bL33c (66 aa).

This sequence belongs to the bacterial ribosomal protein bL33 family.

The protein resides in the plastid. Its subcellular location is the chloroplast. This Cicer arietinum (Chickpea) protein is Large ribosomal subunit protein bL33c.